Here is a 465-residue protein sequence, read N- to C-terminus: Phosphatidate cytidylyltransferase (465 aa).

Residues 1–60 (MSDQPPAENADVRQRRAPESPVTERLRAPARDDARPTSDESDMEGILQDEDSDAGSKNKE) form a disordered region. Residues 10 to 38 (ADVRQRRAPESPVTERLRAPARDDARPTS) show a composition bias toward basic and acidic residues. Residues 39-53 (DESDMEGILQDEDSD) show a composition bias toward acidic residues. Helical transmembrane passes span 95-117 (WVVR…TRGA), 121-143 (MFLV…LAVY), 158-178 (FLLT…WGIV), 187-207 (FLVA…FVSF), 214-234 (GYYM…LLIV), 239-259 (FIIQ…AMII), 288-308 (GFIG…LALY), and 367-387 (IALS…ASGF).

This sequence belongs to the CDS family.

Its subcellular location is the membrane. It carries out the reaction a 1,2-diacyl-sn-glycero-3-phosphate + CTP + H(+) = a CDP-1,2-diacyl-sn-glycerol + diphosphate. It functions in the pathway phospholipid metabolism; CDP-diacylglycerol biosynthesis; CDP-diacylglycerol from sn-glycerol 3-phosphate: step 3/3. Provides CDP-diacylglycerol, an important precursor for the synthesis of phosphatidylinositol (PtdIns). In Caenorhabditis elegans, this protein is Phosphatidate cytidylyltransferase (cdgs-1).